Consider the following 369-residue polypeptide: 4-hydroxy-3-methylbut-2-en-1-yl diphosphate synthase (flavodoxin) (369 aa).

4 residues coordinate [4Fe-4S] cluster: Cys270, Cys273, Cys305, and Glu312.

Belongs to the IspG family. [4Fe-4S] cluster is required as a cofactor.

The enzyme catalyses (2E)-4-hydroxy-3-methylbut-2-enyl diphosphate + oxidized [flavodoxin] + H2O + 2 H(+) = 2-C-methyl-D-erythritol 2,4-cyclic diphosphate + reduced [flavodoxin]. Its pathway is isoprenoid biosynthesis; isopentenyl diphosphate biosynthesis via DXP pathway; isopentenyl diphosphate from 1-deoxy-D-xylulose 5-phosphate: step 5/6. Its function is as follows. Converts 2C-methyl-D-erythritol 2,4-cyclodiphosphate (ME-2,4cPP) into 1-hydroxy-2-methyl-2-(E)-butenyl 4-diphosphate. This is 4-hydroxy-3-methylbut-2-en-1-yl diphosphate synthase (flavodoxin) from Pseudomonas putida (strain W619).